Here is a 350-residue protein sequence, read N- to C-terminus: tRNA uridine(34) hydroxylase (350 aa).

In terms of domain architecture, Rhodanese spans aspartate 146–leucine 240. Catalysis depends on cysteine 200, which acts as the Cysteine persulfide intermediate.

Belongs to the TrhO family.

The enzyme catalyses uridine(34) in tRNA + AH2 + O2 = 5-hydroxyuridine(34) in tRNA + A + H2O. Catalyzes oxygen-dependent 5-hydroxyuridine (ho5U) modification at position 34 in tRNAs, the first step in 5-carboxymethoxyuridine (cmo5U) biosynthesis. May be part of an alternate pathway, which is able to bypass cmo5U biogenesis in a subset of tRNAs under aerobic conditions. The polypeptide is tRNA uridine(34) hydroxylase (Escherichia coli O9:H4 (strain HS)).